We begin with the raw amino-acid sequence, 349 residues long: Fructose-1,6-bisphosphatase class 1 (349 aa).

Residues Glu-113, Asp-135, Ile-137, and Asp-138 each contribute to the Mg(2+) site. Substrate-binding positions include 138–141 (DGSS), Asn-230, Tyr-258, and Lys-288. Position 294 (Glu-294) interacts with Mg(2+).

It belongs to the FBPase class 1 family. In terms of assembly, homotetramer. Requires Mg(2+) as cofactor.

Its subcellular location is the cytoplasm. It catalyses the reaction beta-D-fructose 1,6-bisphosphate + H2O = beta-D-fructose 6-phosphate + phosphate. It functions in the pathway carbohydrate biosynthesis; Calvin cycle. This is Fructose-1,6-bisphosphatase class 1 from Trichormus variabilis (strain ATCC 29413 / PCC 7937) (Anabaena variabilis).